A 257-amino-acid polypeptide reads, in one-letter code: MAPITEEVVHGLKDMIEKLENRVQELEARLGGESKPKSIAEQMRIVLMGPPGAGKGTQAPRLKEKYCVCHLATGDMLRSQVAKKTELGKEAKKIMDQGGLVSDEIMVNMIKNELDTNSECKNGFILDGFPRTVAQAERLDDMLEARNQKLQHAIELQIDDALLVARITGRLVHPASGRSYHKIFNPPKNDMKDDVTGEPLIQRSDDNAETLKKRLSTYHAQTAPVVEYYKKTGIWRGIDASQEPGQVWKSLLGVFQK.

ATP is bound at residue 52-57 (GAGKGT). The tract at residues 72–101 (ATGDMLRSQVAKKTELGKEAKKIMDQGGLV) is NMP. Residues T73, R78, 99–101 (GLV), 128–131 (GFPR), and Q135 each bind AMP. The segment at 169-206 (GRLVHPASGRSYHKIFNPPKNDMKDDVTGEPLIQRSDD) is LID. ATP is bound by residues R170 and 179–180 (SY). R203 and R214 together coordinate AMP. An ATP-binding site is contributed by Q242.

Belongs to the adenylate kinase family. AK2 subfamily. As to quaternary structure, monomer.

It is found in the cytoplasm. It localises to the cytosol. The protein localises to the mitochondrion intermembrane space. It catalyses the reaction AMP + ATP = 2 ADP. Functionally, catalyzes the reversible transfer of the terminal phosphate group between ATP and AMP. Plays an important role in cellular energy homeostasis and in adenine nucleotide metabolism. Adenylate kinase activity is critical for regulation of the phosphate utilization and the AMP de novo biosynthesis pathways. The chain is Adenylate kinase (adk1) from Aspergillus fumigatus (strain CBS 144.89 / FGSC A1163 / CEA10) (Neosartorya fumigata).